We begin with the raw amino-acid sequence, 81 residues long: Photosystem I iron-sulfur center (81 aa).

4Fe-4S ferredoxin-type domains lie at 2 to 31 (SHSV…MVPW) and 37 to 68 (GQIA…VRVY). Positions 11, 14, 17, 21, 48, 51, 54, and 58 each coordinate [4Fe-4S] cluster.

The eukaryotic PSI reaction center is composed of at least 11 subunits. Requires [4Fe-4S] cluster as cofactor.

It is found in the plastid. The protein localises to the chloroplast thylakoid membrane. It catalyses the reaction reduced [plastocyanin] + hnu + oxidized [2Fe-2S]-[ferredoxin] = oxidized [plastocyanin] + reduced [2Fe-2S]-[ferredoxin]. Functionally, apoprotein for the two 4Fe-4S centers FA and FB of photosystem I (PSI); essential for photochemical activity. FB is the terminal electron acceptor of PSI, donating electrons to ferredoxin. The C-terminus interacts with PsaA/B/D and helps assemble the protein into the PSI complex. Required for binding of PsaD and PsaE to PSI. PSI is a plastocyanin/cytochrome c6-ferredoxin oxidoreductase, converting photonic excitation into a charge separation, which transfers an electron from the donor P700 chlorophyll pair to the spectroscopically characterized acceptors A0, A1, FX, FA and FB in turn. The sequence is that of Photosystem I iron-sulfur center from Euglena gracilis.